The primary structure comprises 427 residues: Serine--tRNA ligase (427 aa).

Residue 229-231 (TAE) coordinates L-serine. Residue 260-262 (RSE) coordinates ATP. Residue Glu283 coordinates L-serine. 347–350 (EISS) contributes to the ATP binding site. Position 383 (Ser383) interacts with L-serine.

Belongs to the class-II aminoacyl-tRNA synthetase family. Type-1 seryl-tRNA synthetase subfamily. In terms of assembly, homodimer. The tRNA molecule binds across the dimer.

It localises to the cytoplasm. It catalyses the reaction tRNA(Ser) + L-serine + ATP = L-seryl-tRNA(Ser) + AMP + diphosphate + H(+). The enzyme catalyses tRNA(Sec) + L-serine + ATP = L-seryl-tRNA(Sec) + AMP + diphosphate + H(+). The protein operates within aminoacyl-tRNA biosynthesis; selenocysteinyl-tRNA(Sec) biosynthesis; L-seryl-tRNA(Sec) from L-serine and tRNA(Sec): step 1/1. In terms of biological role, catalyzes the attachment of serine to tRNA(Ser). Is also able to aminoacylate tRNA(Sec) with serine, to form the misacylated tRNA L-seryl-tRNA(Sec), which will be further converted into selenocysteinyl-tRNA(Sec). This is Serine--tRNA ligase from Nitrosococcus oceani (strain ATCC 19707 / BCRC 17464 / JCM 30415 / NCIMB 11848 / C-107).